The chain runs to 140 residues: MPETIDQTNASVSQSQQDLIDQLLKPEVQESLTVLVDQLPKLTELVNILTKSYDFAQSVATDEVLKSDTVGAITEILEPVKETAKEVAATAIEAKDRAEASNETIGLFGLLRMLKDPQAQKLFRFANSYLEVMNERENQK.

This is an uncharacterized protein from Bacillus subtilis (strain 168).